The following is a 124-amino-acid chain: Putative peptidyl-tRNA hydrolase (124 aa).

This sequence belongs to the PTH2 family.

It carries out the reaction an N-acyl-L-alpha-aminoacyl-tRNA + H2O = an N-acyl-L-amino acid + a tRNA + H(+). This chain is Putative peptidyl-tRNA hydrolase, found in Fowlpox virus (strain NVSL) (FPV).